The following is a 397-amino-acid chain: Argininosuccinate synthase (397 aa).

An ATP-binding site is contributed by 9–17 (AYSGGLDTS). Tyr87 provides a ligand contact to L-citrulline. Gly117 provides a ligand contact to ATP. L-aspartate contacts are provided by Thr119, Asn123, and Asp124. Asn123 provides a ligand contact to L-citrulline. Arg127, Ser175, Ser184, Glu260, and Tyr272 together coordinate L-citrulline.

Belongs to the argininosuccinate synthase family. Type 1 subfamily. As to quaternary structure, homotetramer.

The protein resides in the cytoplasm. The catalysed reaction is L-citrulline + L-aspartate + ATP = 2-(N(omega)-L-arginino)succinate + AMP + diphosphate + H(+). Its pathway is amino-acid biosynthesis; L-arginine biosynthesis; L-arginine from L-ornithine and carbamoyl phosphate: step 2/3. This is Argininosuccinate synthase from Methanococcus maripaludis (strain DSM 14266 / JCM 13030 / NBRC 101832 / S2 / LL).